Consider the following 282-residue polypeptide: 4-diphosphocytidyl-2-C-methyl-D-erythritol kinase (282 aa).

Lys13 is an active-site residue. Position 96–106 (96–106) interacts with ATP; the sequence is PMGGGIGGGSS. Asp138 is an active-site residue.

It belongs to the GHMP kinase family. IspE subfamily.

It carries out the reaction 4-CDP-2-C-methyl-D-erythritol + ATP = 4-CDP-2-C-methyl-D-erythritol 2-phosphate + ADP + H(+). The protein operates within isoprenoid biosynthesis; isopentenyl diphosphate biosynthesis via DXP pathway; isopentenyl diphosphate from 1-deoxy-D-xylulose 5-phosphate: step 3/6. Functionally, catalyzes the phosphorylation of the position 2 hydroxy group of 4-diphosphocytidyl-2C-methyl-D-erythritol. The protein is 4-diphosphocytidyl-2-C-methyl-D-erythritol kinase of Pseudomonas syringae pv. tomato (strain ATCC BAA-871 / DC3000).